The chain runs to 255 residues: 5'-nucleotidase SurE (255 aa).

Positions 8, 9, 40, and 93 each coordinate a divalent metal cation.

The protein belongs to the SurE nucleotidase family. It depends on a divalent metal cation as a cofactor.

It localises to the cytoplasm. The enzyme catalyses a ribonucleoside 5'-phosphate + H2O = a ribonucleoside + phosphate. Nucleotidase that shows phosphatase activity on nucleoside 5'-monophosphates. This Rhodopseudomonas palustris (strain HaA2) protein is 5'-nucleotidase SurE.